The chain runs to 328 residues: Probable cytosolic iron-sulfur protein assembly protein 1 (328 aa).

WD repeat units follow at residues 12-49 (LHGD…LVEE), 54-93 (AHKK…YSGE), 102-141 (GHEN…EEFE), 148-187 (EHSQ…WECA), 192-233 (GHGG…ADVF), 246-284 (VHTR…RWEV), and 291-328 (AHTV…LREE).

The protein belongs to the WD repeat CIA1 family. Interacts with NAR1.

The protein localises to the cytoplasm. Its subcellular location is the nucleus. Functionally, essential component of the cytosolic iron-sulfur (Fe/S) protein assembly machinery. Required for the maturation of extramitochondrial Fe/S proteins. This Eremothecium gossypii (strain ATCC 10895 / CBS 109.51 / FGSC 9923 / NRRL Y-1056) (Yeast) protein is Probable cytosolic iron-sulfur protein assembly protein 1.